The sequence spans 189 residues: Gluconokinase (189 aa).

16–23 (GVSGAGKS) provides a ligand contact to ATP.

Belongs to the gluconokinase GntK/GntV family. As to quaternary structure, monomer.

The catalysed reaction is D-gluconate + ATP = 6-phospho-D-gluconate + ADP + H(+). Its pathway is carbohydrate acid metabolism; D-gluconate degradation. In terms of biological role, phosphorylates gluconate to 6-phosphogluconate. This is Gluconokinase from Arabidopsis thaliana (Mouse-ear cress).